A 484-amino-acid polypeptide reads, in one-letter code: Folate synthesis bifunctional protein (484 aa).

Residues 15–141 (VIALGSNVGN…PFVLAPLVDL (127 aa)) are HPPK. Residues 202 to 470 (TYVMGILNLT…NVRDNVDAAR (269 aa)) enclose the Pterin-binding domain. Residues 204–484 (VMGILNLTPD…MMTKRFKNVD (281 aa)) are DHPS. N209 contacts Mg(2+). Residues T249, D286, N305, D378, K423, and 458-460 (RVH) each bind (7,8-dihydropterin-6-yl)methyl diphosphate.

This sequence in the N-terminal section; belongs to the HPPK family. The protein in the C-terminal section; belongs to the DHPS family. Mg(2+) serves as cofactor. In terms of tissue distribution, expressed exclusively in reproductive tissues.

The protein resides in the cytoplasm. The protein localises to the cytosol. The catalysed reaction is 6-hydroxymethyl-7,8-dihydropterin + ATP = (7,8-dihydropterin-6-yl)methyl diphosphate + AMP + H(+). The enzyme catalyses (7,8-dihydropterin-6-yl)methyl diphosphate + 4-aminobenzoate = 7,8-dihydropteroate + diphosphate. The protein operates within cofactor biosynthesis; tetrahydrofolate biosynthesis; 2-amino-4-hydroxy-6-hydroxymethyl-7,8-dihydropteridine diphosphate from 7,8-dihydroneopterin triphosphate: step 4/4. Its pathway is cofactor biosynthesis; tetrahydrofolate biosynthesis; 7,8-dihydrofolate from 2-amino-4-hydroxy-6-hydroxymethyl-7,8-dihydropteridine diphosphate and 4-aminobenzoate: step 1/2. With respect to regulation, inhibited by sulfanilamide. Its function is as follows. Catalyzes the first two consecutive steps of tetrahydrofolate biosynthesis. Plays a role in seed stress response and survival. In Arabidopsis thaliana (Mouse-ear cress), this protein is Folate synthesis bifunctional protein.